Consider the following 266-residue polypeptide: Phosphonates import ATP-binding protein PhnC (266 aa).

An ABC transporter domain is found at 2-246 (IEIKNVSKTY…KFAEIYGRPI (245 aa)). 35–42 (GLSGAGKS) lines the ATP pocket.

The protein belongs to the ABC transporter superfamily. Phosphonates importer (TC 3.A.1.9.1) family. The complex is composed of two ATP-binding proteins (PhnC), two transmembrane proteins (PhnE) and a solute-binding protein (PhnD).

Its subcellular location is the cell membrane. The enzyme catalyses phosphonate(out) + ATP + H2O = phosphonate(in) + ADP + phosphate + H(+). Its function is as follows. Part of the ABC transporter complex PhnCDE involved in phosphonates import. Responsible for energy coupling to the transport system. The chain is Phosphonates import ATP-binding protein PhnC from Shouchella clausii (strain KSM-K16) (Alkalihalobacillus clausii).